The primary structure comprises 717 residues: Fatty acid oxidation complex subunit alpha (717 aa).

The enoyl-CoA hydratase/isomerase stretch occupies residues 1–190 (MIHAGNAITV…KDGAVDAVVA (190 aa)). Asp298 lines the substrate pocket. A 3-hydroxyacyl-CoA dehydrogenase region spans residues 313-717 (HPVNQAAVLG…MAANNKKFYG (405 aa)). NAD(+)-binding positions include Met326, Asp345, 402-404 (VTE), Lys409, and Ser431. His452 acts as the For 3-hydroxyacyl-CoA dehydrogenase activity in catalysis. Asn455 is a binding site for NAD(+). Asn502 provides a ligand contact to substrate.

It in the N-terminal section; belongs to the enoyl-CoA hydratase/isomerase family. This sequence in the C-terminal section; belongs to the 3-hydroxyacyl-CoA dehydrogenase family. Heterotetramer of two alpha chains (FadB) and two beta chains (FadA).

The enzyme catalyses a (3S)-3-hydroxyacyl-CoA + NAD(+) = a 3-oxoacyl-CoA + NADH + H(+). It catalyses the reaction a (3S)-3-hydroxyacyl-CoA = a (2E)-enoyl-CoA + H2O. It carries out the reaction a 4-saturated-(3S)-3-hydroxyacyl-CoA = a (3E)-enoyl-CoA + H2O. The catalysed reaction is (3S)-3-hydroxybutanoyl-CoA = (3R)-3-hydroxybutanoyl-CoA. The enzyme catalyses a (3Z)-enoyl-CoA = a 4-saturated (2E)-enoyl-CoA. It catalyses the reaction a (3E)-enoyl-CoA = a 4-saturated (2E)-enoyl-CoA. It participates in lipid metabolism; fatty acid beta-oxidation. Functionally, involved in the aerobic and anaerobic degradation of long-chain fatty acids via beta-oxidation cycle. Catalyzes the formation of 3-oxoacyl-CoA from enoyl-CoA via L-3-hydroxyacyl-CoA. It can also use D-3-hydroxyacyl-CoA and cis-3-enoyl-CoA as substrate. In Acinetobacter baumannii (strain AB307-0294), this protein is Fatty acid oxidation complex subunit alpha.